The primary structure comprises 616 residues: Chaperone protein HscA (616 aa).

Belongs to the heat shock protein 70 family.

Chaperone involved in the maturation of iron-sulfur cluster-containing proteins. Has a low intrinsic ATPase activity which is markedly stimulated by HscB. Involved in the maturation of IscU. The protein is Chaperone protein HscA of Yersinia enterocolitica serotype O:8 / biotype 1B (strain NCTC 13174 / 8081).